The following is a 669-amino-acid chain: DNA ligase (669 aa).

Residues 33–37 (DAEYD), 82–83 (SL), and glutamate 114 each bind NAD(+). Lysine 116 functions as the N6-AMP-lysine intermediate in the catalytic mechanism. NAD(+) contacts are provided by arginine 137, glutamate 174, lysine 291, and lysine 315. Residues cysteine 409, cysteine 412, cysteine 427, and cysteine 433 each contribute to the Zn(2+) site. A BRCT domain is found at 593–669 (EIPQPLAGKV…QTEQDLLALL (77 aa)).

Belongs to the NAD-dependent DNA ligase family. LigA subfamily. Requires Mg(2+) as cofactor. The cofactor is Mn(2+).

The enzyme catalyses NAD(+) + (deoxyribonucleotide)n-3'-hydroxyl + 5'-phospho-(deoxyribonucleotide)m = (deoxyribonucleotide)n+m + AMP + beta-nicotinamide D-nucleotide.. DNA ligase that catalyzes the formation of phosphodiester linkages between 5'-phosphoryl and 3'-hydroxyl groups in double-stranded DNA using NAD as a coenzyme and as the energy source for the reaction. It is essential for DNA replication and repair of damaged DNA. The chain is DNA ligase from Vibrio vulnificus (strain CMCP6).